Here is a 565-residue protein sequence, read N- to C-terminus: uncharacterized protein (565 aa).

The signal sequence occupies residues 1–19 (MRWLATFVALLIAISSVSA). The span at 494 to 504 (TGAENVTNNSV) shows a compositional bias: polar residues. A disordered region spans residues 494 to 525 (TGAENVTNNSVTATTPPAKASQQTPAPATPPV). Residues 505-519 (TATTPPAKASQQTPA) are compositionally biased toward low complexity.

This is an uncharacterized protein from Archaeoglobus fulgidus (strain ATCC 49558 / DSM 4304 / JCM 9628 / NBRC 100126 / VC-16).